The chain runs to 288 residues: tRNA pseudouridine synthase B (288 aa).

D38 acts as the Nucleophile in catalysis.

This sequence belongs to the pseudouridine synthase TruB family. Type 1 subfamily.

It carries out the reaction uridine(55) in tRNA = pseudouridine(55) in tRNA. Functionally, responsible for synthesis of pseudouridine from uracil-55 in the psi GC loop of transfer RNAs. This chain is tRNA pseudouridine synthase B, found in Carboxydothermus hydrogenoformans (strain ATCC BAA-161 / DSM 6008 / Z-2901).